The sequence spans 519 residues: Anthranilate synthase component 1 (519 aa).

L-tryptophan is bound by residues Ser-39 and 290–292; that span reads PYM. 327 to 328 is a binding site for chorismate; it reads GT. A Mg(2+)-binding site is contributed by Glu-360. Residues Tyr-448, Arg-468, 482–484, and Gly-484 contribute to the chorismate site; that span reads GAG. Glu-497 contributes to the Mg(2+) binding site.

Belongs to the anthranilate synthase component I family. In terms of assembly, heterotetramer consisting of two non-identical subunits: a beta subunit (TrpG) and a large alpha subunit (TrpE). Mg(2+) is required as a cofactor.

It catalyses the reaction chorismate + L-glutamine = anthranilate + pyruvate + L-glutamate + H(+). Its pathway is amino-acid biosynthesis; L-tryptophan biosynthesis; L-tryptophan from chorismate: step 1/5. With respect to regulation, feedback inhibited by tryptophan. Part of a heterotetrameric complex that catalyzes the two-step biosynthesis of anthranilate, an intermediate in the biosynthesis of L-tryptophan. In the first step, the glutamine-binding beta subunit (TrpG) of anthranilate synthase (AS) provides the glutamine amidotransferase activity which generates ammonia as a substrate that, along with chorismate, is used in the second step, catalyzed by the large alpha subunit of AS (TrpE) to produce anthranilate. In the absence of TrpG, TrpE can synthesize anthranilate directly from chorismate and high concentrations of ammonia. The chain is Anthranilate synthase component 1 (trpE) from Serratia marcescens.